A 143-amino-acid polypeptide reads, in one-letter code: Large ribosomal subunit protein uL11 (143 aa).

Belongs to the universal ribosomal protein uL11 family. Part of the ribosomal stalk of the 50S ribosomal subunit. Interacts with L10 and the large rRNA to form the base of the stalk. L10 forms an elongated spine to which L12 dimers bind in a sequential fashion forming a multimeric L10(L12)X complex. Post-translationally, one or more lysine residues are methylated.

In terms of biological role, forms part of the ribosomal stalk which helps the ribosome interact with GTP-bound translation factors. This Burkholderia multivorans (strain ATCC 17616 / 249) protein is Large ribosomal subunit protein uL11.